The following is a 301-amino-acid chain: tRNA pseudouridine synthase B (301 aa).

Residue aspartate 38 is the Nucleophile of the active site.

This sequence belongs to the pseudouridine synthase TruB family. Type 1 subfamily.

It catalyses the reaction uridine(55) in tRNA = pseudouridine(55) in tRNA. In terms of biological role, responsible for synthesis of pseudouridine from uracil-55 in the psi GC loop of transfer RNAs. This Ehrlichia canis (strain Jake) protein is tRNA pseudouridine synthase B.